A 419-amino-acid polypeptide reads, in one-letter code: Glutamyl-tRNA reductase (419 aa).

Substrate contacts are provided by residues 49 to 52 (TCNR), S107, 112 to 114 (EPQ), and Q118. C50 functions as the Nucleophile in the catalytic mechanism. 187–192 (GAGETI) is an NADP(+) binding site.

The protein belongs to the glutamyl-tRNA reductase family. As to quaternary structure, homodimer.

It carries out the reaction (S)-4-amino-5-oxopentanoate + tRNA(Glu) + NADP(+) = L-glutamyl-tRNA(Glu) + NADPH + H(+). It functions in the pathway porphyrin-containing compound metabolism; protoporphyrin-IX biosynthesis; 5-aminolevulinate from L-glutamyl-tRNA(Glu): step 1/2. In terms of biological role, catalyzes the NADPH-dependent reduction of glutamyl-tRNA(Glu) to glutamate 1-semialdehyde (GSA). This chain is Glutamyl-tRNA reductase, found in Psychromonas ingrahamii (strain DSM 17664 / CCUG 51855 / 37).